An 84-amino-acid polypeptide reads, in one-letter code: Small ribosomal subunit protein eS27 (84 aa).

The span at 1 to 16 (MPLAKDPLHPSPEEEK) shows a compositional bias: basic and acidic residues. The tract at residues 1 to 25 (MPLAKDPLHPSPEEEKRKHKKKRLV) is disordered. Residue Ser-11 is modified to Phosphoserine. A C4-type zinc finger spans residues 38 to 60 (PGCYKITTVFSHAQTVVLCVGCS).

It belongs to the eukaryotic ribosomal protein eS27 family. As to quaternary structure, component of the small ribosomal subunit. Part of the small subunit (SSU) processome, composed of more than 70 proteins and the RNA chaperone small nucleolar RNA (snoRNA) U3. Zn(2+) serves as cofactor.

It localises to the cytoplasm. The protein localises to the nucleus. It is found in the nucleolus. Component of the small ribosomal subunit. The ribosome is a large ribonucleoprotein complex responsible for the synthesis of proteins in the cell. Required for proper rRNA processing and maturation of 18S rRNAs. Part of the small subunit (SSU) processome, first precursor of the small eukaryotic ribosomal subunit. During the assembly of the SSU processome in the nucleolus, many ribosome biogenesis factors, an RNA chaperone and ribosomal proteins associate with the nascent pre-rRNA and work in concert to generate RNA folding, modifications, rearrangements and cleavage as well as targeted degradation of pre-ribosomal RNA by the RNA exosome. This Pongo abelii (Sumatran orangutan) protein is Small ribosomal subunit protein eS27 (RPS27).